A 487-amino-acid polypeptide reads, in one-letter code: Protein nucleotidyltransferase YdiU (487 aa).

8 residues coordinate ATP: glycine 90, glycine 92, arginine 93, lysine 113, aspartate 125, glycine 126, arginine 176, and arginine 183. The active-site Proton acceptor is the aspartate 252. 2 residues coordinate Mg(2+): asparagine 253 and aspartate 262. Aspartate 262 contacts ATP.

This sequence belongs to the SELO family. The cofactor is Mg(2+). Mn(2+) serves as cofactor.

It catalyses the reaction L-seryl-[protein] + ATP = 3-O-(5'-adenylyl)-L-seryl-[protein] + diphosphate. The catalysed reaction is L-threonyl-[protein] + ATP = 3-O-(5'-adenylyl)-L-threonyl-[protein] + diphosphate. The enzyme catalyses L-tyrosyl-[protein] + ATP = O-(5'-adenylyl)-L-tyrosyl-[protein] + diphosphate. It carries out the reaction L-histidyl-[protein] + UTP = N(tele)-(5'-uridylyl)-L-histidyl-[protein] + diphosphate. It catalyses the reaction L-seryl-[protein] + UTP = O-(5'-uridylyl)-L-seryl-[protein] + diphosphate. The catalysed reaction is L-tyrosyl-[protein] + UTP = O-(5'-uridylyl)-L-tyrosyl-[protein] + diphosphate. Its function is as follows. Nucleotidyltransferase involved in the post-translational modification of proteins. It can catalyze the addition of adenosine monophosphate (AMP) or uridine monophosphate (UMP) to a protein, resulting in modifications known as AMPylation and UMPylation. The chain is Protein nucleotidyltransferase YdiU from Pseudomonas fluorescens (strain Pf0-1).